The primary structure comprises 162 residues: Transcription elongation factor GreB (162 aa).

Residues 52–73 (KKLLREIDRRVRYLRKRLEDVK) are a coiled coil.

The protein belongs to the GreA/GreB family. GreB subfamily.

Functionally, necessary for efficient RNA polymerase transcription elongation past template-encoded arresting sites. The arresting sites in DNA have the property of trapping a certain fraction of elongating RNA polymerases that pass through, resulting in locked ternary complexes. Cleavage of the nascent transcript by cleavage factors such as GreA or GreB allows the resumption of elongation from the new 3'terminus. GreB releases sequences of up to 9 nucleotides in length. This is Transcription elongation factor GreB from Pseudomonas putida (strain ATCC 47054 / DSM 6125 / CFBP 8728 / NCIMB 11950 / KT2440).